The sequence spans 596 residues: Arginine--tRNA ligase (596 aa).

The 'HIGH' region signature appears at 128 to 138; the sequence is ANPTSSLHVGH.

This sequence belongs to the class-I aminoacyl-tRNA synthetase family. In terms of assembly, monomer.

The protein resides in the cytoplasm. It carries out the reaction tRNA(Arg) + L-arginine + ATP = L-arginyl-tRNA(Arg) + AMP + diphosphate. The polypeptide is Arginine--tRNA ligase (Acinetobacter baumannii (strain AB307-0294)).